The chain runs to 525 residues: Alpha-ketoglutaric semialdehyde dehydrogenase 2 (525 aa).

NAD(+) contacts are provided by residues Lys185, Glu188, and 242-247 (GSRQGG). The Proton acceptor role is filled by Glu266. The Nucleophile role is filled by Cys303. NAD(+) is bound at residue Glu394.

Belongs to the aldehyde dehydrogenase family. Homodimer.

The enzyme catalyses 2,5-dioxopentanoate + NADP(+) + H2O = 2-oxoglutarate + NADPH + 2 H(+). The catalysed reaction is 2,5-dioxopentanoate + NAD(+) + H2O = 2-oxoglutarate + NADH + 2 H(+). The protein operates within carbohydrate acid metabolism; D-glucarate degradation. It functions in the pathway carbohydrate acid metabolism; galactarate degradation. Its function is as follows. Catalyzes the NAD(P)(+)-dependent oxidation of alpha-ketoglutaric semialdehyde (alphaKGSA) to alpha-ketoglutarate. Involved in D-glucarate/D-galactarate metabolism. Prefers NAD(+) to NADP(+) as a cosubstrate. The polypeptide is Alpha-ketoglutaric semialdehyde dehydrogenase 2 (Azospirillum brasilense).